Reading from the N-terminus, the 329-residue chain is Quinate dehydrogenase (329 aa).

The catalysed reaction is L-quinate + NAD(+) = 3-dehydroquinate + NADH + H(+). Its pathway is aromatic compound metabolism; 3,4-dihydroxybenzoate biosynthesis; 3-dehydroquinate from D-quinate (NAD(+) route): step 1/1. The chain is Quinate dehydrogenase (qutB) from Emericella nidulans (strain FGSC A4 / ATCC 38163 / CBS 112.46 / NRRL 194 / M139) (Aspergillus nidulans).